A 736-amino-acid chain; its full sequence is Phosphoribosylformylglycinamidine synthase subunit PurL (736 aa).

The active site involves H48. ATP-binding residues include Y51 and K90. Residue E92 coordinates Mg(2+). Substrate is bound by residues 93–96 and R115; that span reads SHNH. H94 (proton acceptor) is an active-site residue. D116 serves as a coordination point for Mg(2+). Q239 provides a ligand contact to substrate. D267 provides a ligand contact to Mg(2+). 311-313 is a binding site for substrate; the sequence is ESQ. ATP is bound by residues D492 and G529. Residue N530 coordinates Mg(2+). S532 is a binding site for substrate.

The protein belongs to the FGAMS family. As to quaternary structure, monomer. Part of the FGAM synthase complex composed of 1 PurL, 1 PurQ and 2 PurS subunits.

It is found in the cytoplasm. It carries out the reaction N(2)-formyl-N(1)-(5-phospho-beta-D-ribosyl)glycinamide + L-glutamine + ATP + H2O = 2-formamido-N(1)-(5-O-phospho-beta-D-ribosyl)acetamidine + L-glutamate + ADP + phosphate + H(+). The protein operates within purine metabolism; IMP biosynthesis via de novo pathway; 5-amino-1-(5-phospho-D-ribosyl)imidazole from N(2)-formyl-N(1)-(5-phospho-D-ribosyl)glycinamide: step 1/2. In terms of biological role, part of the phosphoribosylformylglycinamidine synthase complex involved in the purines biosynthetic pathway. Catalyzes the ATP-dependent conversion of formylglycinamide ribonucleotide (FGAR) and glutamine to yield formylglycinamidine ribonucleotide (FGAM) and glutamate. The FGAM synthase complex is composed of three subunits. PurQ produces an ammonia molecule by converting glutamine to glutamate. PurL transfers the ammonia molecule to FGAR to form FGAM in an ATP-dependent manner. PurS interacts with PurQ and PurL and is thought to assist in the transfer of the ammonia molecule from PurQ to PurL. In Bradyrhizobium sp. (strain ORS 278), this protein is Phosphoribosylformylglycinamidine synthase subunit PurL.